The following is a 311-amino-acid chain: MKILKIATRKSALALWQSEHIKARLMAQHAGLQVELVGMKTKGDVILDTPLAKIGGKGLFTKELEDSMLSGQTHIAVHSLKDVPVAFLDGLVLAAICSREDVRDAMISQRYVKFDDLPQSAKVGTTSLRRKMQLLRMRPDLNIISLRGNVQTRLRKLKEGEFDAIILAMAGINRLNLADEVAHIYPFDIAQMTPAMGQGALGVEAVDDAQILEKIKFLNDERSVIETRVERDFVTLLEGGCQVPIGINARLASEEIEINAIVGLPDGSEVITENLTAKKSEFESVGKELAREFIARGAKELLKRAEEMANL.

At cysteine 241 the chain carries S-(dipyrrolylmethanemethyl)cysteine.

This sequence belongs to the HMBS family. In terms of assembly, monomer. Requires dipyrromethane as cofactor.

The catalysed reaction is 4 porphobilinogen + H2O = hydroxymethylbilane + 4 NH4(+). Its pathway is porphyrin-containing compound metabolism; protoporphyrin-IX biosynthesis; coproporphyrinogen-III from 5-aminolevulinate: step 2/4. Its function is as follows. Tetrapolymerization of the monopyrrole PBG into the hydroxymethylbilane pre-uroporphyrinogen in several discrete steps. This Campylobacter curvus (strain 525.92) protein is Porphobilinogen deaminase.